Here is a 93-residue protein sequence, read N- to C-terminus: Large ribosomal subunit protein uL23 (93 aa).

This sequence belongs to the universal ribosomal protein uL23 family. As to quaternary structure, part of the 50S ribosomal subunit. Contacts protein L29, and trigger factor when it is bound to the ribosome.

Its function is as follows. One of the early assembly proteins it binds 23S rRNA. One of the proteins that surrounds the polypeptide exit tunnel on the outside of the ribosome. Forms the main docking site for trigger factor binding to the ribosome. In Campylobacter jejuni subsp. jejuni serotype O:2 (strain ATCC 700819 / NCTC 11168), this protein is Large ribosomal subunit protein uL23.